The following is a 151-amino-acid chain: Ribosome maturation factor RimP (151 aa).

The protein belongs to the RimP family.

It localises to the cytoplasm. Its function is as follows. Required for maturation of 30S ribosomal subunits. The chain is Ribosome maturation factor RimP from Crocosphaera subtropica (strain ATCC 51142 / BH68) (Cyanothece sp. (strain ATCC 51142)).